We begin with the raw amino-acid sequence, 508 residues long: MQAALVILDGWGLGDHDRRDAVRAADTPTFDEYAERGAFGTLTTSGRDVGLPDGQMGNSEVGHLTIGAGRVVKQAYTRIEDAIAAGDLCGNDAISGALDHVADTGGTLHVMGLVSDGGVHADQQHIHALVECAAGRGVEAAVHAFTDGRDTSPTGGEDYLADLEAVADEHGTGDVASVSGRYYAMDRDQNWARTKRAYDAITRSDGVAHHAAAAVDAVTDSYERGDTDEFVEPTTIEGGAALSDGDAVVFANFRADRARQLTRLLADIHPADWDADGIETNPPAVPVVTMTEYDETFDCPVAFPAAEPTDTLGAVLAAHDHTQLRVAESEKYAHVTYFLNGGREVAFDGETRTIVDSPDVPTYDEQPAMSAPAVTDTVLDALAGDDPDVLVLNYANPDMVGHTGDFDAAIEAVEAVDRELGRLVPALNDAGAHAFLTADHGNADDLGTPADPHTAHTFNPVPFVSLPPASGDTAAVRDGGALRDIAPTLLDVLGIDRPTVMTGASLLE.

2 residues coordinate Mn(2+): D9 and S59. S59 acts as the Phosphoserine intermediate in catalysis. Substrate contacts are provided by residues H120, R149–D150, R181, R187, R254–R257, and K331. Residues D398, H402, D439, H440, and H456 each contribute to the Mn(2+) site.

The protein belongs to the BPG-independent phosphoglycerate mutase family. Mn(2+) is required as a cofactor.

It carries out the reaction (2R)-2-phosphoglycerate = (2R)-3-phosphoglycerate. It participates in carbohydrate degradation; glycolysis; pyruvate from D-glyceraldehyde 3-phosphate: step 3/5. Catalyzes the interconversion of 2-phosphoglycerate and 3-phosphoglycerate. The protein is 2,3-bisphosphoglycerate-independent phosphoglycerate mutase of Halobacterium salinarum (strain ATCC 700922 / JCM 11081 / NRC-1) (Halobacterium halobium).